A 434-amino-acid chain; its full sequence is Enolase (434 aa).

Glutamine 167 contacts (2R)-2-phosphoglycerate. Glutamate 209 serves as the catalytic Proton donor. Mg(2+)-binding residues include aspartate 246, glutamate 291, and aspartate 318. Residues lysine 343, arginine 372, serine 373, and lysine 394 each coordinate (2R)-2-phosphoglycerate. The active-site Proton acceptor is lysine 343.

It belongs to the enolase family. As to quaternary structure, component of the RNA degradosome, a multiprotein complex involved in RNA processing and mRNA degradation. It depends on Mg(2+) as a cofactor.

Its subcellular location is the cytoplasm. It localises to the secreted. It is found in the cell surface. It carries out the reaction (2R)-2-phosphoglycerate = phosphoenolpyruvate + H2O. Its pathway is carbohydrate degradation; glycolysis; pyruvate from D-glyceraldehyde 3-phosphate: step 4/5. Functionally, catalyzes the reversible conversion of 2-phosphoglycerate (2-PG) into phosphoenolpyruvate (PEP). It is essential for the degradation of carbohydrates via glycolysis. The chain is Enolase from Buchnera aphidicola subsp. Acyrthosiphon pisum (strain APS) (Acyrthosiphon pisum symbiotic bacterium).